A 275-amino-acid chain; its full sequence is Large ribosomal subunit protein uL2 (275 aa).

The interval 221–275 (RGSAMTPRDHPHGGGEGKAPRGMPPKTPWGKPALGKRTRRNKKSDRFIIRRRYEA) is disordered. The span at 227–239 (PRDHPHGGGEGKA) shows a compositional bias: basic and acidic residues. A compositionally biased stretch (basic residues) spans 254–263 (LGKRTRRNKK). Over residues 264–275 (SDRFIIRRRYEA) the composition is skewed to basic and acidic residues.

Belongs to the universal ribosomal protein uL2 family. In terms of assembly, part of the 50S ribosomal subunit. Forms a bridge to the 30S subunit in the 70S ribosome.

Its function is as follows. One of the primary rRNA binding proteins. Required for association of the 30S and 50S subunits to form the 70S ribosome, for tRNA binding and peptide bond formation. It has been suggested to have peptidyltransferase activity; this is somewhat controversial. Makes several contacts with the 16S rRNA in the 70S ribosome. The chain is Large ribosomal subunit protein uL2 from Thermomicrobium roseum (strain ATCC 27502 / DSM 5159 / P-2).